Here is a 271-residue protein sequence, read N- to C-terminus: Proteasome inhibitor PI31 subunit (271 aa).

A2 is modified (N-acetylalanine). Positions 2-150 (AGLEVLFASA…PIHEQWEKVR (149 aa)) are important for homodimerization and interaction with FBXO7. Residues S153 and S189 each carry the phosphoserine modification. Position 205 is an omega-N-methylarginine (R205). An Asymmetric dimethylarginine modification is found at R219. The interval 221 to 271 (LIDPSSGLPNRLPPGAVPPGARFDPFGPIGTSPSGPNPDHLPPPGYDDMYL) is disordered. R231 bears the Omega-N-methylarginine mark. A Phosphoserine modification is found at S252. Residues 255-265 (GPNPDHLPPPG) are compositionally biased toward pro residues.

This sequence belongs to the proteasome inhibitor PI31 family. Monomer and homodimer. Interacts with FBXO7.

It is found in the cytoplasm. The protein localises to the endoplasmic reticulum. Functionally, plays an important role in control of proteasome function. Inhibits the hydrolysis of protein and peptide substrates by the 20S proteasome. Also inhibits the activation of the proteasome by the proteasome regulatory proteins PA700 and PA28. In Rattus norvegicus (Rat), this protein is Proteasome inhibitor PI31 subunit (Psmf1).